Reading from the N-terminus, the 317-residue chain is NAD-dependent protein deacetylase Sirt6 (317 aa).

The 247-residue stretch at 27–273 folds into the Deacetylase sirtuin-type domain; sequence DEVVAEKCQE…SKVCKLLGVE (247 aa). NAD(+) is bound by residues A53, T57, F64, R65, W71, Q113, and H133. The Proton acceptor role is filled by H133. The Zn(2+) site is built by C141, C144, C166, and C177. 4 residues coordinate NAD(+): G215, N241, Q243, and V259.

The protein belongs to the sirtuin family. Class IV subfamily. Zn(2+) is required as a cofactor. Widely expressed.

It localises to the nucleus. It is found in the chromosome. It catalyses the reaction N(6)-acetyl-L-lysyl-[protein] + NAD(+) + H2O = 2''-O-acetyl-ADP-D-ribose + nicotinamide + L-lysyl-[protein]. Its function is as follows. NAD-dependent histone deacylase that acts as a regulator of life span. The sequence is that of NAD-dependent protein deacetylase Sirt6 from Drosophila melanogaster (Fruit fly).